The following is a 194-amino-acid chain: Early growth response protein 1 (194 aa).

C2H2-type zinc fingers lie at residues 1–18 (CDRR…IRIH), 24–46 (FQCR…IRTH), and 52–74 (FACD…TKIH). The tract at residues 66-88 (ERKRHTKIHLRQKDKKVEKAASV) is disordered. Positions 69-79 (RHTKIHLRQKD) are enriched in basic residues.

This sequence belongs to the EGR C2H2-type zinc-finger protein family.

The protein localises to the nucleus. Its subcellular location is the cytoplasm. In terms of biological role, transcriptional regulator. Recognizes and binds to the DNA sequence 5'-GCG(T/G)GGGCG-3'(EGR-site) in the promoter region of target genes. Binds double-stranded target DNA, irrespective of the cytosine methylation status. Regulates the transcription of numerous target genes, and thereby plays an important role in regulating the response to growth factors, DNA damage, and ischemia. Plays a role in the regulation of cell survival, proliferation and cell death. Mediates responses to ischemia and hypoxia; regulates the expression of proteins that are involved in inflammatory processes. Plays a role in regulating the expression of circadian clock genes. The polypeptide is Early growth response protein 1 (EGR1) (Coturnix japonica (Japanese quail)).